The sequence spans 1407 residues: DNA-directed RNA polymerase subunit beta' (1407 aa).

Zn(2+)-binding residues include C70, C72, C85, and C88. Residues D460, D462, and D464 each coordinate Mg(2+). Positions 814, 888, 895, and 898 each coordinate Zn(2+). K972 bears the N6-acetyllysine mark.

This sequence belongs to the RNA polymerase beta' chain family. As to quaternary structure, the RNAP catalytic core consists of 2 alpha, 1 beta, 1 beta' and 1 omega subunit. When a sigma factor is associated with the core the holoenzyme is formed, which can initiate transcription. Mg(2+) serves as cofactor. It depends on Zn(2+) as a cofactor.

The catalysed reaction is RNA(n) + a ribonucleoside 5'-triphosphate = RNA(n+1) + diphosphate. DNA-dependent RNA polymerase catalyzes the transcription of DNA into RNA using the four ribonucleoside triphosphates as substrates. This chain is DNA-directed RNA polymerase subunit beta', found in Escherichia coli O6:H1 (strain CFT073 / ATCC 700928 / UPEC).